A 549-amino-acid polypeptide reads, in one-letter code: Probable serine/threonine-protein kinase WNK5 (549 aa).

The region spanning 25-283 (GRFREVLGKG…AKELLADPFL (259 aa)) is the Protein kinase domain. Residues 105–108 (TELF) and Lys155 contribute to the ATP site. Asp172 (proton acceptor) is an active-site residue. The interval 414–490 (ESFGHEDDED…SPAIDDDQNQ (77 aa)) is disordered. A compositionally biased stretch (acidic residues) spans 452-463 (DDSSNDVIPDMD). The segment covering 467-476 (RSSNRLLNSS) has biased composition (low complexity). Ser504 carries the phosphoserine modification. Positions 525 to 549 (RGRGFDPNTNELQPQPSSTDFIRRC) are disordered. The span at 531–549 (PNTNELQPQPSSTDFIRRC) shows a compositional bias: polar residues.

Belongs to the protein kinase superfamily. Ser/Thr protein kinase family. WNK subfamily. Interacts with AHK4.

The catalysed reaction is L-seryl-[protein] + ATP = O-phospho-L-seryl-[protein] + ADP + H(+). It carries out the reaction L-threonyl-[protein] + ATP = O-phospho-L-threonyl-[protein] + ADP + H(+). In terms of biological role, regulates flowering time by modulating the photoperiod pathway. The protein is Probable serine/threonine-protein kinase WNK5 (WNK5) of Arabidopsis thaliana (Mouse-ear cress).